The primary structure comprises 163 residues: Protein FAM167B (163 aa).

Residues 73-132 (FDSMDSALEWLRRELREMQAQDRQLAGQLLRLRAQLHRLKMDQACHLHQELLDEAELELE) adopt a coiled-coil conformation.

It belongs to the FAM167 (SEC) family.

In Homo sapiens (Human), this protein is Protein FAM167B (FAM167B).